The chain runs to 89 residues: cAMP-regulated phosphoprotein 21 (89 aa).

Residues 1 to 89 (MSEPGDLSQT…GGESLQDQTL (89 aa)) form a disordered region. The residue at position 2 (S2) is an N-acetylserine. A phosphoserine mark is found at S33 and S56.

In terms of assembly, interacts with CALM1. In terms of processing, phosphorylation at Ser-56 favors interaction with CALM1.

The protein localises to the cytoplasm. Functionally, may act as a competitive inhibitor of calmodulin-dependent enzymes such as calcineurin in neurons. In Bos taurus (Bovine), this protein is cAMP-regulated phosphoprotein 21 (ARPP21).